Consider the following 253-residue polypeptide: uncharacterized protein (253 aa).

This is an uncharacterized protein from Escherichia coli O6:H1 (strain CFT073 / ATCC 700928 / UPEC).